A 137-amino-acid chain; its full sequence is Large ribosomal subunit protein uL16 (137 aa).

The protein belongs to the universal ribosomal protein uL16 family. Part of the 50S ribosomal subunit.

Binds 23S rRNA and is also seen to make contacts with the A and possibly P site tRNAs. The protein is Large ribosomal subunit protein uL16 of Streptococcus pneumoniae serotype 2 (strain D39 / NCTC 7466).